The sequence spans 27 residues: Protein YqfI (27 aa).

The polypeptide is Protein YqfI (Escherichia coli (strain K12)).